Reading from the N-terminus, the 235-residue chain is Phosphoribosylaminoimidazole-succinocarboxamide synthase (235 aa).

This sequence belongs to the SAICAR synthetase family.

It carries out the reaction 5-amino-1-(5-phospho-D-ribosyl)imidazole-4-carboxylate + L-aspartate + ATP = (2S)-2-[5-amino-1-(5-phospho-beta-D-ribosyl)imidazole-4-carboxamido]succinate + ADP + phosphate + 2 H(+). It functions in the pathway purine metabolism; IMP biosynthesis via de novo pathway; 5-amino-1-(5-phospho-D-ribosyl)imidazole-4-carboxamide from 5-amino-1-(5-phospho-D-ribosyl)imidazole-4-carboxylate: step 1/2. This Lachnoclostridium phytofermentans (strain ATCC 700394 / DSM 18823 / ISDg) (Clostridium phytofermentans) protein is Phosphoribosylaminoimidazole-succinocarboxamide synthase.